Here is a 991-residue protein sequence, read N- to C-terminus: Valine--tRNA ligase (991 aa).

A 'HIGH' region motif is present at residues 43–53 (PNVTGTLHMGH). The short motif at 582–586 (KMSKS) is the 'KMSKS' region element. Position 585 (Lys-585) interacts with ATP. A disordered region spans residues 689–711 (AHSPAQHQAGQDGQDAPRTPQPR). Positions 693 to 704 (AQHQAGQDGQDA) are enriched in low complexity. Residues 925–988 (LIDVDAERAR…TQLNGLRERR (64 aa)) are a coiled coil.

Belongs to the class-I aminoacyl-tRNA synthetase family. ValS type 1 subfamily. Monomer.

The protein localises to the cytoplasm. It catalyses the reaction tRNA(Val) + L-valine + ATP = L-valyl-tRNA(Val) + AMP + diphosphate. Catalyzes the attachment of valine to tRNA(Val). As ValRS can inadvertently accommodate and process structurally similar amino acids such as threonine, to avoid such errors, it has a 'posttransfer' editing activity that hydrolyzes mischarged Thr-tRNA(Val) in a tRNA-dependent manner. In Xylella fastidiosa (strain M12), this protein is Valine--tRNA ligase.